Here is a 176-residue protein sequence, read N- to C-terminus: Lipoprotein signal peptidase (176 aa).

The next 3 membrane-spanning stretches (helical) occupy residues 12–32 (WYWV…WVLT), 67–87 (WQKW…TIWL), and 94–114 (VWRL…NLID). Residues Asp123 and Asp141 contribute to the active site. The helical transmembrane segment at 133-153 (HFAAFNIADSAICIGAGLIIL) threads the bilayer.

It belongs to the peptidase A8 family.

It localises to the cell inner membrane. It carries out the reaction Release of signal peptides from bacterial membrane prolipoproteins. Hydrolyzes -Xaa-Yaa-Zaa-|-(S,diacylglyceryl)Cys-, in which Xaa is hydrophobic (preferably Leu), and Yaa (Ala or Ser) and Zaa (Gly or Ala) have small, neutral side chains.. It functions in the pathway protein modification; lipoprotein biosynthesis (signal peptide cleavage). Its function is as follows. This protein specifically catalyzes the removal of signal peptides from prolipoproteins. The chain is Lipoprotein signal peptidase from Shewanella sediminis (strain HAW-EB3).